Reading from the N-terminus, the 273-residue chain is L-fucose dehydrogenase (273 aa).

Positions 19, 21, 40, 41, 62, 63, 89, 154, 158, 187, 189, and 191 each coordinate NAD(+). Y154 serves as the catalytic Proton acceptor.

Belongs to the short-chain dehydrogenases/reductases (SDR) family. Homotetramer.

It is found in the cytoplasm. The catalysed reaction is L-fucose + NAD(+) = L-fucono-1,5-lactone + NADH + H(+). It carries out the reaction D-arabinose + NAD(+) = D-arabinono-1,5-lactone + NADH + H(+). It catalyses the reaction L-galactose + NAD(+) = L-galactono-1,5-lactone + NADH + H(+). Its pathway is carbohydrate degradation; L-fucose degradation. Functionally, catalyzes the NAD(+)-dependent oxidation of L-fucose, yielding L-fucono-1,5-lactone, which rapidly converts spontaneously to L-fucone-1,4-lactone. Can also act on D-arabinose and L-galactose, with lower catalytic efficiency. Does not use NADPH. May be the initial enzyme of the putative L-fucose degradation pathway in mammals. This chain is L-fucose dehydrogenase, found in Mus musculus (Mouse).